A 456-amino-acid chain; its full sequence is tRNA-2-methylthio-N(6)-dimethylallyladenosine synthase (456 aa).

The 119-residue stretch at Lys19–Val137 folds into the MTTase N-terminal domain. Cys28, Cys64, Cys98, Cys174, Cys178, and Cys181 together coordinate [4Fe-4S] cluster. The Radical SAM core domain occupies Arg160–Asn392. The TRAM domain maps to Lys393–Glu456.

It belongs to the methylthiotransferase family. MiaB subfamily. Monomer. [4Fe-4S] cluster is required as a cofactor.

Its subcellular location is the cytoplasm. The enzyme catalyses N(6)-dimethylallyladenosine(37) in tRNA + (sulfur carrier)-SH + AH2 + 2 S-adenosyl-L-methionine = 2-methylsulfanyl-N(6)-dimethylallyladenosine(37) in tRNA + (sulfur carrier)-H + 5'-deoxyadenosine + L-methionine + A + S-adenosyl-L-homocysteine + 2 H(+). In terms of biological role, catalyzes the methylthiolation of N6-(dimethylallyl)adenosine (i(6)A), leading to the formation of 2-methylthio-N6-(dimethylallyl)adenosine (ms(2)i(6)A) at position 37 in tRNAs that read codons beginning with uridine. This chain is tRNA-2-methylthio-N(6)-dimethylallyladenosine synthase, found in Clostridium botulinum (strain Eklund 17B / Type B).